Reading from the N-terminus, the 307-residue chain is Junctional adhesion molecule 2A (307 aa).

Positions 1–18 (MLVCVSLLILIHSVPVSP) are cleaved as a signal peptide. The 94-residue stretch at 19 to 112 (VTVSSRNPKV…EVSAPSDSIS (94 aa)) folds into the Ig-like V-type domain. The Extracellular portion of the chain corresponds to 19-226 (VTVSSRNPKV…FQTHDLNVAA (208 aa)). Intrachain disulfides connect Cys40/Cys102 and Cys147/Cys197. The Ig-like C2-type domain maps to 126–225 (PQTPSCDVPS…TFQTHDLNVA (100 aa)). Residues 227-247 (VVSAVVLVCVILFLCAFGVCL) form a helical membrane-spanning segment. Residues 248 to 307 (AHRQGYFSRHRGRSFWIPHCHGVTHISSQNLNPSEHTQHSGYSHPPKEPQDFKHTQSFML) lie on the Cytoplasmic side of the membrane. Positions 278 to 288 (LNPSEHTQHSG) are enriched in polar residues. The segment at 278–307 (LNPSEHTQHSGYSHPPKEPQDFKHTQSFML) is disordered. Basic and acidic residues predominate over residues 292 to 301 (PPKEPQDFKH).

Belongs to the immunoglobulin superfamily.

Its subcellular location is the cell membrane. The protein localises to the cell junction. It is found in the tight junction. Junctional adhesion protein that mediates heterotypic cell-cell interactions to regulate different cellular processes. During myogenesis, it is involved in myocyte fusion through the binding of jam3b on neighboring myocytes. The protein is Junctional adhesion molecule 2A (jam2a) of Danio rerio (Zebrafish).